A 149-amino-acid polypeptide reads, in one-letter code: Large ribosomal subunit protein uL15 (149 aa).

The segment at 1-52 (MSELLKLHHLRPAPGSNKAKIRKGRGEASKGKTAGRGTKGTKARSTVPAGFE) is disordered.

This sequence belongs to the universal ribosomal protein uL15 family. As to quaternary structure, part of the 50S ribosomal subunit.

Binds to the 23S rRNA. This is Large ribosomal subunit protein uL15 from Thermobifida fusca (strain YX).